The sequence spans 150 residues: Transthyretin (150 aa).

The first 20 residues, 1-20, serve as a signal peptide directing secretion; the sequence is MGSSSLLLVCLAGMVYLTEA. Cys33 is subject to Sulfocysteine. L-thyroxine is bound by residues Lys38, Glu77, and Ser140.

Belongs to the transthyretin family. As to quaternary structure, homotetramer. Dimer of dimers. In the homotetramer, subunits assemble around a central channel that can accommodate two ligand molecules. Interacts with RBP4. In terms of processing, sulfonation of the reactive cysteine Cys-33 enhances the stability of the native conformation of TTR, avoiding misassembly of the protein leading to amyloid formation. As to expression, detected in choroid plexus (at protein level). Detected in choroid plexus.

It is found in the secreted. Functionally, thyroid hormone-binding protein. Probably transports thyroxine from the bloodstream to the brain. This chain is Transthyretin (TTR), found in Tiliqua rugosa (Shingleback lizard).